The primary structure comprises 238 residues: Deoxyribose-phosphate aldolase (238 aa).

Catalysis depends on Asp-102, which acts as the Proton donor/acceptor. Lys-164 (schiff-base intermediate with acetaldehyde) is an active-site residue. The Proton donor/acceptor role is filled by Lys-193.

Belongs to the DeoC/FbaB aldolase family. DeoC type 1 subfamily.

The protein resides in the cytoplasm. The catalysed reaction is 2-deoxy-D-ribose 5-phosphate = D-glyceraldehyde 3-phosphate + acetaldehyde. The protein operates within carbohydrate degradation; 2-deoxy-D-ribose 1-phosphate degradation; D-glyceraldehyde 3-phosphate and acetaldehyde from 2-deoxy-alpha-D-ribose 1-phosphate: step 2/2. Its function is as follows. Catalyzes a reversible aldol reaction between acetaldehyde and D-glyceraldehyde 3-phosphate to generate 2-deoxy-D-ribose 5-phosphate. This Rhodospirillum rubrum (strain ATCC 11170 / ATH 1.1.1 / DSM 467 / LMG 4362 / NCIMB 8255 / S1) protein is Deoxyribose-phosphate aldolase.